Here is a 1391-residue protein sequence, read N- to C-terminus: Enhancer of mRNA-decapping protein 4 (1391 aa).

4 WD repeats span residues 170–210 (GITG…GKIQ), 226–274 (SIFR…TNHN), 292–331 (GHSG…QDQP), and 340–390 (HNGR…SLQT). Disordered stretches follow at residues 703–724 (QASP…AMPQ) and 897–924 (DWKS…LAKS). The span at 915–924 (KKDEMELAKS) shows a compositional bias: basic and acidic residues. A coiled-coil region spans residues 935-968 (ELQEELLCMLRSQQKELSDLRQNQLELMKKLTDH).

It belongs to the WD repeat EDC4 family.

It localises to the cytoplasm. It is found in the P-body. The protein resides in the nucleus. Functionally, in the process of mRNA degradation, seems to play a role in mRNA decapping. The protein is Enhancer of mRNA-decapping protein 4 (edc4) of Xenopus laevis (African clawed frog).